The sequence spans 196 residues: Adenylate kinase (196 aa).

9 to 17 (GIPGVGKST) is an ATP binding site.

Belongs to the archaeal adenylate kinase family.

Its subcellular location is the cytoplasm. It catalyses the reaction AMP + ATP = 2 ADP. This is Adenylate kinase from Thermococcus onnurineus (strain NA1).